The following is a 413-amino-acid chain: Gamma-glutamyl phosphate reductase (413 aa).

This sequence belongs to the gamma-glutamyl phosphate reductase family.

It is found in the cytoplasm. The enzyme catalyses L-glutamate 5-semialdehyde + phosphate + NADP(+) = L-glutamyl 5-phosphate + NADPH + H(+). The protein operates within amino-acid biosynthesis; L-proline biosynthesis; L-glutamate 5-semialdehyde from L-glutamate: step 2/2. Functionally, catalyzes the NADPH-dependent reduction of L-glutamate 5-phosphate into L-glutamate 5-semialdehyde and phosphate. The product spontaneously undergoes cyclization to form 1-pyrroline-5-carboxylate. In Lactococcus lactis subsp. cremoris (strain SK11), this protein is Gamma-glutamyl phosphate reductase.